The chain runs to 170 residues: RNA pyrophosphohydrolase (170 aa).

In terms of domain architecture, Nudix hydrolase spans 8 to 158 (PYRTCVGMML…KRPVYERVVK (151 aa)). A Nudix box motif is present at residues 46–67 (GGVDPGEDTWLAAKRELYEETS).

This sequence belongs to the Nudix hydrolase family. RppH subfamily. It depends on a divalent metal cation as a cofactor.

In terms of biological role, accelerates the degradation of transcripts by removing pyrophosphate from the 5'-end of triphosphorylated RNA, leading to a more labile monophosphorylated state that can stimulate subsequent ribonuclease cleavage. The protein is RNA pyrophosphohydrolase of Nitrobacter winogradskyi (strain ATCC 25391 / DSM 10237 / CIP 104748 / NCIMB 11846 / Nb-255).